The chain runs to 152 residues: MFRGASAINLDTKGRIAIPVRYREPLQLEHQGRIVITVDIQSACLLLYPIHEWELIEAKLLKFSDTDKTQRSLKRLLLGYAHEVELDGNGRILLPPPLRQYANLDKRIMLVGQLNKFELWDEQSWLQQIDECQETIRSEELASNERLADFSL.

SpoVT-AbrB domains lie at 5-52 (ASAI…PIHE) and 81-124 (AHEV…DEQS).

It belongs to the MraZ family. In terms of assembly, forms oligomers.

The protein resides in the cytoplasm. It localises to the nucleoid. This chain is Transcriptional regulator MraZ, found in Shewanella baltica (strain OS195).